The chain runs to 2587 residues: Protein KINKY POLLEN (2587 aa).

A signal peptide spans 1–27; sequence MAAFLVMFIFTIALFVALLWVFFKSLP. Residue N71 is glycosylated (N-linked (GlcNAc...) asparagine). Residues 103–124 form a disordered region; sequence PSHSSKGPRKPKTRKSSSGGKG. The segment covering 108–117 has biased composition (basic residues); it reads KGPRKPKTRK. N-linked (GlcNAc...) asparagine glycosylation is found at N262, N281, and N485. Residues 270–290 form a disordered region; it reads SKGEVIDSSSGNTTSEKPPKQ. Polar residues predominate over residues 276 to 285; the sequence is DSSSGNTTSE. The segment at 589 to 611 is disordered; sequence GSSSKNKQEKGAHRSKPPSGRGT. A coiled-coil region spans residues 691-716; it reads TLNKEIQSTQVELETAKAIYQEFLEE. Residues 784–814 form a disordered region; that stretch reads QHGNRNPEEASTVTGDKQKEEPTTTPNSLDK. N-linked (GlcNAc...) asparagine glycans are attached at residues N1155, N1250, N1281, and N1486. Disordered stretches follow at residues 1571-1608, 1646-1673, and 1729-1797; these read HCSK…KHPD, VDAR…DGYN, and EGNQ…PEEE. The segment covering 1576–1590 has biased composition (polar residues); sequence AQMSRTSSLSGSTDR. N-linked (GlcNAc...) asparagine glycosylation occurs at N1595. Over residues 1646 to 1666 the composition is skewed to basic and acidic residues; that stretch reads VDARSTKEKQSEPEENSHSDP. Polar residues predominate over residues 1746-1760; the sequence is KQPSTGSGNLASQSK. N-linked (GlcNAc...) asparagine glycans are attached at residues N1861, N1951, N1981, N2036, and N2278. A coiled-coil region spans residues 2006–2036; sequence IEEVELAKIELEAKERDRMMLLDDIRKLTQN. Polar residues predominate over residues 2274–2287; it reads QGSKNQSLKSSTIR. Disordered regions lie at residues 2274 to 2299, 2319 to 2360, and 2442 to 2469; these read QGSK…TSSF, SMEH…KKSR, and KDDI…RPGD. 4 stretches are compositionally biased toward basic and acidic residues: residues 2289 to 2299, 2322 to 2336, 2343 to 2359, and 2442 to 2458; these read SGRELRRTSSF, HQGE…DSKT, SVHE…DKKS, and KDDI…RTDQ. N-linked (GlcNAc...) asparagine glycans are attached at residues N2513 and N2544. A disordered region spans residues 2533 to 2587; that stretch reads IRRHSKKFQNQNTTKGSKKTQLSPTLSPPKEEDQYESDSSSGSSAYEEFLDQNQI. Polar residues predominate over residues 2540 to 2557; it reads FQNQNTTKGSKKTQLSPT. Low complexity predominate over residues 2569–2579; it reads SDSSSGSSAYE.

Belongs to the SABRE family. As to expression, mostly expressed in pollen and roots, especially in tip-growing cells, but also present in seedlings, stems, leaves, buds, flowers, siliques and seeds.

The protein localises to the secreted. It is found in the golgi apparatus. In terms of biological role, may be involved in membrane trafficking. Required for tip growth in pollen tubes and root hairs. The protein is Protein KINKY POLLEN of Arabidopsis thaliana (Mouse-ear cress).